Here is a 269-residue protein sequence, read N- to C-terminus: 2-keto-4-pentenoate hydratase (269 aa).

This sequence belongs to the hydratase/decarboxylase family. MhpD subfamily. A divalent metal cation is required as a cofactor.

It carries out the reaction (S)-4-hydroxy-2-oxopentanoate = (2Z)-2-hydroxypenta-2,4-dienoate + H2O. Its pathway is aromatic compound metabolism; 3-phenylpropanoate degradation. Catalyzes the conversion of 2-hydroxypentadienoic acid (enolic form of 2-oxopent-4-enoate) to 4-hydroxy-2-ketopentanoic acid. The sequence is that of 2-keto-4-pentenoate hydratase from Paraburkholderia xenovorans (strain LB400).